The primary structure comprises 599 residues: MKNIRNFSIIAHIDHGKSTLSDRIIQICGGLSDREMEAQVLDSMDLERERGITIKAQSVTLDYKASDGETYQLNFIDTPGHVDFSYEVSRSLAACEGALLVVDAGQGVEAQTLANCYTAMEMDLEVVPVLNKIDLPAADPERVAEEIEDIVGIDATDAVRCSAKTGVGVQDVLERLVRDIPPPEGDPEGPLQALIIDSWFDNYLGVVSLIRIKNGTLRKGDKVKVMSTGQTYNADRLGIFTPKQVDRTELKCGEVGWLVCAIKDIHGAPVGDTLTLARNPAEKALPGFKKVKPQVYAGLFPVSSDDYEAFRDALGKLSLNDASLFYEPESSSALGFGFRCGFLGLLHMEIIQERLEREYDLDLITTAPTVVYEVETTSREVIYVDSPSKLPAVNNIYELREPIAECHMLLPQAYLGNVITLCVEKRGVQTNMVYHGNQVALTYEIPMAEVVLDFFDRLKSTSRGYASLDYNFKRFQASDMVRVDVLINGERVDALALITHRDNSQNRGRELVEKMKDLIPRQQFDIAIQAAIGTHIIARSTVKQLRKNVLAKCYGGDISRKKKLLQKQKEGKKRMKQIGNVELPQEAFLAILHVGKDNK.

The tr-type G domain occupies 2–184 (KNIRNFSIIA…RLVRDIPPPE (183 aa)). GTP is bound by residues 14–19 (DHGKST) and 131–134 (NKID).

Belongs to the TRAFAC class translation factor GTPase superfamily. Classic translation factor GTPase family. LepA subfamily.

The protein resides in the cell inner membrane. It catalyses the reaction GTP + H2O = GDP + phosphate + H(+). Functionally, required for accurate and efficient protein synthesis under certain stress conditions. May act as a fidelity factor of the translation reaction, by catalyzing a one-codon backward translocation of tRNAs on improperly translocated ribosomes. Back-translocation proceeds from a post-translocation (POST) complex to a pre-translocation (PRE) complex, thus giving elongation factor G a second chance to translocate the tRNAs correctly. Binds to ribosomes in a GTP-dependent manner. This is Elongation factor 4 from Escherichia fergusonii (strain ATCC 35469 / DSM 13698 / CCUG 18766 / IAM 14443 / JCM 21226 / LMG 7866 / NBRC 102419 / NCTC 12128 / CDC 0568-73).